Here is a 2063-residue protein sequence, read N- to C-terminus: Nuclear receptor coactivator 6 (2063 aa).

Residues 1-928 (MVLDDLPNLE…PPRKKKNSQQ (928 aa)) are TBP/GTF2A-binding region. The tract at residues 1–1057 (MVLDDLPNLE…LPVSQNVHPP (1057 aa)) is CREBBP-binding region. The NCOA1-binding region stretch occupies residues 1–1310 (MVLDDLPNLE…QTHKLDSVVV (1310 aa)). R95 bears the Asymmetric dimethylarginine mark. Disordered stretches follow at residues 184–251 (IPPG…VNRQ), 281–549 (QQQQ…APQL), and 789–811 (RPPG…ANND). The span at 281–300 (QQQQQLQARPPQQHQQQQPQ) shows a compositional bias: low complexity. 5 stretches are compositionally biased toward polar residues: residues 353 to 368 (MQQQ…TVQT), 379 to 406 (GSQQ…QMKS), 417 to 453 (PLQQ…QQQM), 462 to 502 (PLPQ…QGPQ), and 522 to 549 (GQAN…APQL). The NCOA6IP-binding region stretch occupies residues 773–927 (VNNSPSQVMG…KPPRKKKNSQ (155 aa)). Phosphoserine; by MAPK; in vitro is present on S884. Positions 887–891 (LVNLL) match the LXXLL motif 1 motif. 3 disordered regions span residues 899–1278 (HFGV…LNPT), 1310–1353 (VNSG…KAPK), and 1448–1474 (EVKM…PSVE). Positions 903 to 912 (NNKQNNTNAN) are enriched in low complexity. Residues 913–925 (KPKKKKPPRKKKN) show a composition bias toward basic residues. The segment covering 982 to 992 (PLQQMPPQLMQ) has biased composition (low complexity). The segment covering 995 to 1020 (APPPQPPQQQPQPQLPQQQQPPPPSQ) has biased composition (pro residues). Over residues 1021–1041 (PQSQQQQQQQQQMMMMLMMQQ) the composition is skewed to low complexity. 2 positions are modified to asymmetric dimethylarginine: R1047 and R1058. Over residues 1063–1075 (PDSQRMPMQQSGS) the composition is skewed to polar residues. Position 1096 is an asymmetric dimethylarginine (R1096). 3 stretches are compositionally biased toward polar residues: residues 1104 to 1125 (PLGS…SSSP), 1173 to 1191 (LSAT…SLPS), and 1202 to 1214 (APTQ…TPNR). Over residues 1219–1232 (PYYPQTPNNRPPST) the composition is skewed to pro residues. Over residues 1310 to 1320 (VNSGKQSNSGA) the composition is skewed to polar residues. The segment covering 1322–1345 (KRASPSNSRRSSPGSSRKTTPSPG) has biased composition (low complexity). The LXXLL motif 2 motif lies at 1491–1495 (LSQLL). Residues 1641–2063 (SEGQSAAQSN…AVQSKRRKSK (423 aa)) form an EP300/CRSP3-binding region region. The disordered stretch occupies residues 1738–1820 (ATPVQLPSPP…VSSSKGKGKV (83 aa)). Low complexity predominate over residues 1750 to 1763 (SSPVVPSHPPVQQV). Positions 1773-1798 (PQVNTSADQNTLPSSQSTTMVSPLLT) are enriched in polar residues. The span at 1799-1815 (NSPGSSGNRRSPVSSSK) shows a compositional bias: low complexity. Residues K1819 and K1822 each carry the N6-acetyllysine modification. 2 disordered regions span residues 1837–1908 (GSLE…LPGG) and 1995–2063 (IVSG…RKSK). The segment covering 2002-2011 (EPKEIVEKSK) has biased composition (basic and acidic residues). At S2018 the chain carries Phosphoserine.

As to quaternary structure, monomer and homodimer. Interacts with RBM39. Interacts in vitro with the basal transcription factors GTF2A and TBP, suggesting an autonomous transactivation function. Interacts with NCOA1, CRSP3, RBM14, the histone acetyltransferases EP300 and CREBBP, and with the methyltransferases NCOA6IP and PRMT2/HRMT1L1. Component of the MLL2/3 complex (also named ASCOM complex), at least composed of KMT2D/MLL2 or KMT2C/MLL3, ASH2L, RBBP5, WDR5, NCOA6, DPY30, KDM6A, PAXIP1/PTIP, PAGR1 and alpha- and beta-tubulin. Interacts with ZNF335; may enhance ligand-dependent transcriptional activation by nuclear hormone receptors. In terms of processing, phosphorylated by PRKDC. Phosphorylation on Ser-884 leads to a strong decrease in binding to ESR1 and ESR2. Ubiquitous. Highly expressed in brain, prostate, testis and ovary; weakly expressed in lung, thymus and small intestine.

It localises to the nucleus. Functionally, nuclear receptor coactivator that directly binds nuclear receptors and stimulates the transcriptional activities in a hormone-dependent fashion. Coactivates expression in an agonist- and AF2-dependent manner. Involved in the coactivation of different nuclear receptors, such as for steroids (GR and ERs), retinoids (RARs and RXRs), thyroid hormone (TRs), vitamin D3 (VDR) and prostanoids (PPARs). Probably functions as a general coactivator, rather than just a nuclear receptor coactivator. May also be involved in the coactivation of the NF-kappa-B pathway. May coactivate expression via a remodeling of chromatin and its interaction with histone acetyltransferase proteins. This chain is Nuclear receptor coactivator 6 (NCOA6), found in Homo sapiens (Human).